The sequence spans 448 residues: Tubulin beta chain (448 aa).

Positions 11, 69, 138, 142, 143, 144, 204, and 226 each coordinate GTP. Residue glutamate 69 participates in Mg(2+) binding.

The protein belongs to the tubulin family. Dimer of alpha and beta chains. A typical microtubule is a hollow water-filled tube with an outer diameter of 25 nm and an inner diameter of 15 nM. Alpha-beta heterodimers associate head-to-tail to form protofilaments running lengthwise along the microtubule wall with the beta-tubulin subunit facing the microtubule plus end conferring a structural polarity. Microtubules usually have 13 protofilaments but different protofilament numbers can be found in some organisms and specialized cells. Mg(2+) serves as cofactor.

Its subcellular location is the cytoplasm. It localises to the cytoskeleton. Tubulin is the major constituent of microtubules, a cylinder consisting of laterally associated linear protofilaments composed of alpha- and beta-tubulin heterodimers. Microtubules grow by the addition of GTP-tubulin dimers to the microtubule end, where a stabilizing cap forms. Below the cap, tubulin dimers are in GDP-bound state, owing to GTPase activity of alpha-tubulin. The protein is Tubulin beta chain (TUB1) of Melampsora lini (Rust fungus).